The primary structure comprises 162 residues: Phosphopantetheine adenylyltransferase (162 aa).

Ser-11 provides a ligand contact to substrate. ATP-binding positions include 11-12 (SF) and His-19. The substrate site is built by Lys-43, Thr-75, and Arg-89. ATP-binding positions include 90-92 (GLR), Glu-100, and 125-131 (YAFLSSS).

Belongs to the bacterial CoaD family. As to quaternary structure, homohexamer. Requires Mg(2+) as cofactor.

Its subcellular location is the cytoplasm. The catalysed reaction is (R)-4'-phosphopantetheine + ATP + H(+) = 3'-dephospho-CoA + diphosphate. It participates in cofactor biosynthesis; coenzyme A biosynthesis; CoA from (R)-pantothenate: step 4/5. In terms of biological role, reversibly transfers an adenylyl group from ATP to 4'-phosphopantetheine, yielding dephospho-CoA (dPCoA) and pyrophosphate. This Finegoldia magna (strain ATCC 29328 / DSM 20472 / WAL 2508) (Peptostreptococcus magnus) protein is Phosphopantetheine adenylyltransferase.